The chain runs to 173 residues: Anti-CBASS protein Acb1 (173 aa).

Tyr17 is a binding site for 3',3'-cGAMP. Tyr17 serves as a coordination point for 3',3'-cUAMP. Catalysis depends on residues His49, Thr51, His118, and Thr120. Glu151 contacts 3',3'-cGAMP. Glu151 is a 3',3'-cUAMP binding site.

The protein belongs to the anti-CBASS protein Acb1 family.

The catalysed reaction is 3',3'-cUAMP + H2O = U[3'-5']pAp[3'] + H(+). The enzyme catalyses 3',3',3'-c-tri-AMP + H2O = A[3'-5']pA[3'-5']pAp[3'] + H(+). It catalyses the reaction 3',3',3'-cAAG + H2O = G[3'-5']pA[3'-5']pAp[3'] + H(+). It carries out the reaction 3',3',3'-cAAG + H2O = A[3'-5']pG[3'-5']pAp[3'] + H(+). The catalysed reaction is 3',3'-cGAMP + H2O = G[3'-5']pAp[3'] + H(+). Its function is as follows. Counteracts the host CBASS antiviral defense system. Phosphodiesterase that enables metal-independent hydrolysis of the host cyclic di- and trinucleotide CBASS signals such as 3'3'-cGAMP, 3'3'cUA, and 3'3'3'-cAAA. Does not cleave cGG or cA4. Besides evasion of the CBASS system, might also enable evasion of the type III CRISPR systems that use cA3 signals. The sequence is that of Anti-CBASS protein Acb1 from Escherichia phage RB16.